The sequence spans 443 residues: UDP-N-acetylmuramate--L-alanine ligase (443 aa).

ATP is bound at residue 111–117; it reads GAHGKTS.

The protein belongs to the MurCDEF family.

It localises to the cytoplasm. The enzyme catalyses UDP-N-acetyl-alpha-D-muramate + L-alanine + ATP = UDP-N-acetyl-alpha-D-muramoyl-L-alanine + ADP + phosphate + H(+). The protein operates within cell wall biogenesis; peptidoglycan biosynthesis. Its function is as follows. Cell wall formation. The polypeptide is UDP-N-acetylmuramate--L-alanine ligase (Ligilactobacillus salivarius (strain UCC118) (Lactobacillus salivarius)).